The primary structure comprises 317 residues: Zinc finger protein 771 (317 aa).

Residues 1–17 (MPGEQQAEEEEEEEMQE) show a composition bias toward acidic residues. Residues 1-63 (MPGEQQAEEE…APSADPARPH (63 aa)) are disordered. Lys-33 participates in a covalent cross-link: Glycyl lysine isopeptide (Lys-Gly) (interchain with G-Cter in SUMO2). Residues 33-49 (KYEVVKLKIPMDNKEVP) are compositionally biased toward basic and acidic residues. 8 C2H2-type zinc fingers span residues 63 to 85 (HACP…ARTH), 91 to 113 (FGCT…GRTH), 119 to 141 (YECP…RRRH), 147 to 169 (YACA…LRVH), 175 to 197 (YACP…RRTH), 203 to 225 (YACA…RRVH), 231 to 253 (HRCA…ARTH), and 259 to 281 (YPCA…RRAH).

This sequence belongs to the krueppel C2H2-type zinc-finger protein family.

Its subcellular location is the nucleus. In terms of biological role, may be involved in transcriptional regulation. This Homo sapiens (Human) protein is Zinc finger protein 771 (ZNF771).